The sequence spans 225 residues: 2-C-methyl-D-erythritol 4-phosphate cytidylyltransferase (225 aa).

This sequence belongs to the IspD/TarI cytidylyltransferase family. IspD subfamily.

The enzyme catalyses 2-C-methyl-D-erythritol 4-phosphate + CTP + H(+) = 4-CDP-2-C-methyl-D-erythritol + diphosphate. It participates in isoprenoid biosynthesis; isopentenyl diphosphate biosynthesis via DXP pathway; isopentenyl diphosphate from 1-deoxy-D-xylulose 5-phosphate: step 2/6. Its function is as follows. Catalyzes the formation of 4-diphosphocytidyl-2-C-methyl-D-erythritol from CTP and 2-C-methyl-D-erythritol 4-phosphate (MEP). This Clostridium perfringens (strain ATCC 13124 / DSM 756 / JCM 1290 / NCIMB 6125 / NCTC 8237 / Type A) protein is 2-C-methyl-D-erythritol 4-phosphate cytidylyltransferase.